A 1051-amino-acid chain; its full sequence is SWI/SNF-related matrix-associated actin-dependent regulator of chromatin subfamily A member 5 (1051 aa).

Positions 1–15 (MSSAVEPPPPPPPES) are enriched in pro residues. The segment at 1–81 (MSSAVEPPPP…IQEPDPTYEE (81 aa)) is disordered. Ser2 is subject to N-acetylserine. The span at 24 to 38 (GAGGSSSGNKGGPEG) shows a compositional bias: gly residues. Residues 39-53 (GAAPAAPCAAGSGPA) are compositionally biased toward low complexity. Phosphothreonine is present on Thr55. Ser65 bears the Phosphoserine mark. The segment covering 68 to 81 (KQKEIQEPDPTYEE) has biased composition (basic and acidic residues). Lys82 participates in a covalent cross-link: Glycyl lysine isopeptide (Lys-Gly) (interchain with G-Cter in SUMO2). Residue Thr112 is modified to Phosphothreonine. Phosphoserine is present on residues Ser115, Ser136, and Ser170. The Helicase ATP-binding domain occupies 191–356 (ISLYENGING…WSLLNFLLPD (166 aa)). 204-211 (DEMGLGKT) is a binding site for ATP. The DEAH box signature appears at 307–310 (DEAH). Lys439 bears the N6-acetyllysine mark. One can recognise a Helicase C-terminal domain in the interval 486-637 (VLDKLLPKLK…SIVIQQGRLV (152 aa)). Residues Lys643, Lys646, Lys693, Lys721, and Lys734 each participate in a glycyl lysine isopeptide (Lys-Gly) (interchain with G-Cter in SUMO2) cross-link. Residue Ser754 is modified to Phosphoserine. SANT domains lie at 839–891 (QGFT…ERCN) and 942–1006 (KGKN…LITL). Residue Lys965 forms a Glycyl lysine isopeptide (Lys-Gly) (interchain with G-Cter in SUMO2) linkage. A disordered region spans residues 1014-1051 (LEEKEKAEKKKRGPKPSTQKRKMDGAPDGRGRKKKLKL). The span at 1022 to 1033 (KKKRGPKPSTQK) shows a compositional bias: basic residues. The segment covering 1034 to 1043 (RKMDGAPDGR) has biased composition (basic and acidic residues).

Belongs to the SNF2/RAD54 helicase family. ISWI subfamily. Component of the ACF-5 ISWI chromatin-remodeling complex (also called the ACF/WCRF complex) at least composed of SMARCA5/SNF2H and BAZ1A/ACF1, which regulates the spacing of histone octamers on the DNA template to facilitate access to DNA. Within the complex interacts with BAZ1A/ACF1; the interaction is direct and is required to slide nucleosomes from end to center positions on a DNA template in an ATP-dependent manner. Component of the CHRAC ISWI chromatin-remodeling complex at least composed of SMARCA5/SNF2H, BAZ1A/ACF1, CHRAC1 and POLE3; the complex preferentially binds DNA through the CHRAC1-POLE3 heterodimer and possesses ATP-dependent nucleosome-remodeling activity. Within the complex interacts with BAZ1A/ACF1; the interaction is direct and promotes the interaction with the POLE3-CHRAC1 heterodimer. Within the complex interacts with the POLE3-CHRAC1 heterodimer; the interaction is direct and enhances nucleosome sliding activity by the SMARCA5/SNF2H and BAZ1A/ACF1 interaction. Neither POLE3 nor CHRAC1 enhances nucleosome sliding activity of the ACF-5 ISWI chromatin remodeling complex. Component of the WICH-5 ISWI chromatin-remodeling complex (also called the WICH complex) at least composed of SMARCA5/SNF2H and BAZ1B/WSTF, which regulates the spacing of histone octamers on the DNA template to facilitate access to DNA. Within the complex interacts with BAZ1B/WSTF. Component of the NoRC-5 ISWI chromatin-remodeling complex (also called the NoRC chromatin-remodeling complex) at least composed of SMARCA5/SNF2H and BAZ2A/TIP5; the complex suppresses rDNA transcription by a combination of nucleosome remodeling, histone deacetylation, and DNA methylation. Within the complex interacts with BAZ2A/TIP5. Within the complex interacts with HDAC1. Component of the BRF-5 ISWI chromatin-remodeling complex at least composed of SMARCA5/SNF2H and BAZ2B. Within the complex interacts with BAZ2B. Component of the NURF-5 ISWI chromatin-remodeling complex at least composed of SMARCA5/SNF2H and BPTF. Within the complex interacts with BPFT. Component of the CERF-5 ISWI chromatin-remodeling complex at least composed of SMARCA5/SNF2H and CECR2. LUZP1 is detected as part of the CERF-5 complex in embryonic stem cells where it is involved in complex stabilization but is not detected in the complex in the testis. Component of the RSF-5 ISWI chromatin-remodeling complex (also called the RSF complex) at least composed of SMARCA5/SNF2H and RSF1. Within the complex interacts with RSF1. Interacts with the cohesin complex component RAD21; the interaction is direct. Interacts with the NuRD complex components HDAC2, RBBP4 and CHD4; the interactions are direct. Interacts with PCNA. Component of the B-WICH complex, at least composed of SMARCA5/SNF2H, BAZ1B/WSTF, SF3B1, DEK, MYO1C, ERCC6, MYBBP1A and DDX21 which positively regulates RNA polymerase III transcription. Interacts with MYO1C. Interacts with BEND3. Interacts with SIRT6; promoting recruitment to DNA damage sites. As to expression, ubiquitously expressed.

The protein resides in the nucleus. It is found in the chromosome. The catalysed reaction is ATP + H2O = ADP + phosphate + H(+). In terms of biological role, ATPase that possesses intrinsic ATP-dependent nucleosome-remodeling activity. Catalytic subunit of ISWI chromatin-remodeling complexes, which form ordered nucleosome arrays on chromatin and facilitate access to DNA during DNA-templated processes such as DNA replication, transcription, and repair; this may require intact histone H4 tails. Within the ISWI chromatin-remodeling complexes, slides edge- and center-positioned histone octamers away from their original location on the DNA template. Catalytic activity and histone octamer sliding propensity is regulated and determined by components of the ISWI chromatin-remodeling complexes. The BAZ1A/ACF1-, BAZ1B/WSTF-, BAZ2A/TIP5- and BAZ2B-containing ISWI chromatin-remodeling complexes regulate the spacing of nucleosomes along the chromatin and have the ability to slide mononucleosomes to the center of a DNA template in an ATP-dependent manner. The CECR2- and RSF1-containing ISWI chromatin-remodeling complexes do not have the ability to slide mononucleosomes to the center of a DNA template. Binds to core histones together with RSF1, and is required for the assembly of regular nucleosome arrays by the RSF-5 ISWI chromatin-remodeling complex. Involved in DNA replication and together with BAZ1A/ACF1 is required for replication of pericentric heterochromatin in S-phase. Probably plays a role in repression of RNA polymerase I dependent transcription of the rDNA locus, through the recruitment of the SIN3/HDAC1 corepressor complex to the rDNA promoter. The WICH-5 ISWI chromatin-remodeling complex regulates the transcription of various genes, has a role in RNA polymerase I and RNA polymerase III transcription, mediates the histone H2AX phosphorylation at 'Tyr-142', and is involved in the maintenance of chromatin structures during DNA replication processes. Essential component of the NoRC-5 ISWI chromatin-remodeling complex, a complex that mediates silencing of a fraction of rDNA by recruiting histone-modifying enzymes and DNA methyltransferases, leading to heterochromatin formation and transcriptional silencing. Required for embryonic development and differentiation, and the proliferation of early blastocyst-derived stem cells. The protein is SWI/SNF-related matrix-associated actin-dependent regulator of chromatin subfamily A member 5 (Smarca5) of Mus musculus (Mouse).